The chain runs to 441 residues: Leucine-rich repeat-containing protein 17 (441 aa).

The signal sequence occupies residues 1–18 (MRVVTIVILLCFCKAAEL). 3 LRR repeats span residues 82-103 (DLLH…MFSK), 106-127 (KLKS…AFFG), and 130-151 (KLTT…VFIY). An LRRCT 1 domain is found at 163–214 (NPWHCTCEIETLISMLQIPRNRNLGNYAKCESPQEQKNKKLRQIKSEQLCNE). The LRRNT domain occupies 225–268 (QVSGRPPVIKPEVDSTFCHNYVFPIQTLDCKRKELKKVPNNIPP). LRR repeat units follow at residues 269–290 (DIVK…EFED), 293–314 (ELKK…AFLG), and 317–340 (HLEE…EDLY). The LRRCT 2 domain maps to 350 to 402 (NPWRCDYNIHYLYYWLKHHYNVHFNGLECKTPEEYKGWSVGKYIRSYYEECPK).

In terms of tissue distribution, expressed in osteoblast cell lines. Well expressed in ovary, heart, pancreas, skeletal muscle, lung, and fetal kidney and lung and only at the basal levels in the other tissues examined including adult kidney. More expressed in S-type neuroblastoma cells than in N-type neuroblastoma cells.

The protein resides in the secreted. It localises to the extracellular space. Its function is as follows. Involved in bone homeostasis. Acts as a negative regulator of RANKL-induced osteoclast precursor differentiation from bone marrow precursors. This is Leucine-rich repeat-containing protein 17 (LRRC17) from Homo sapiens (Human).